The chain runs to 483 residues: Glutamyl-tRNA(Gln) amidotransferase subunit A (483 aa).

Residues lysine 76 and serine 151 each act as charge relay system in the active site. Serine 175 acts as the Acyl-ester intermediate in catalysis.

Belongs to the amidase family. GatA subfamily. In terms of assembly, heterotrimer of A, B and C subunits.

It carries out the reaction L-glutamyl-tRNA(Gln) + L-glutamine + ATP + H2O = L-glutaminyl-tRNA(Gln) + L-glutamate + ADP + phosphate + H(+). In terms of biological role, allows the formation of correctly charged Gln-tRNA(Gln) through the transamidation of misacylated Glu-tRNA(Gln) in organisms which lack glutaminyl-tRNA synthetase. The reaction takes place in the presence of glutamine and ATP through an activated gamma-phospho-Glu-tRNA(Gln). The protein is Glutamyl-tRNA(Gln) amidotransferase subunit A of Pseudomonas fluorescens (strain ATCC BAA-477 / NRRL B-23932 / Pf-5).